Consider the following 787-residue polypeptide: uncharacterized protein (787 aa).

The first 22 residues, 1–22, serve as a signal peptide directing secretion; it reads MKFKYCAIFFSGFLGLSAILAA. A lipid anchor (N-palmitoyl cysteine) is attached at C23. C23 carries S-diacylglycerol cysteine lipidation. Disordered stretches follow at residues 178-270 and 473-495; these read SDNV…DNKI and KSKE…KKES. Over residues 181–208 the composition is skewed to polar residues; that stretch reads VKVSQRTGETTQKSKVTNPLKINTQNDP. A compositionally biased stretch (basic and acidic residues) spans 209–219; the sequence is ATKDLWEKIEA. Over residues 242-261 the composition is skewed to low complexity; that stretch reads SSSSSLVNLKQSTDQTTTDD.

The protein belongs to the MG185/MG260 family.

Its subcellular location is the cell membrane. This is an uncharacterized protein from Mycoplasma pneumoniae (strain ATCC 29342 / M129 / Subtype 1) (Mycoplasmoides pneumoniae).